The sequence spans 281 residues: MTPILNHYFARINWSGAAAVNIDTLRALHLKHNCTIPFENLDVLLPREIQLDNQSPEEKLVIARRGGYCFEQNGVFERVLRELGFNVRSLLGRVVLSNPPALPPRTHRLLLVELEEEKWIADVGFGGQTLTAPIRLVSDLVQTTPHGEYRLLQEGDDWVLQFNHHQHWQSMYRFDLCEQQQSDYVMGNFWSAHWPQSHFRHHLLMCRHLPDGGKLTLTNFHFTHYENGHAVEQRNLPDVASLYAVMQEQFGLGVDDAKHGFTVDELALVMAAFDTHPEAGK.

Cys69 (acyl-thioester intermediate) is an active-site residue. Residues His107 and Asp122 contribute to the active site. 2 positions are modified to N6-acetyllysine: Lys214 and Lys281.

Belongs to the arylamine N-acetyltransferase family. In terms of assembly, homodimer. In terms of processing, acetylated on Lys-214 and Lys-281. Deacetylated by CobB.

The protein resides in the cytoplasm. The enzyme catalyses an arylamine + acetyl-CoA = an N-acetylarylamine + CoA. The catalysed reaction is an N-hydroxyarylamine + acetyl-CoA = an N-acetoxyarylamine + CoA. Inhibited by salicylic acid, acetylsalicylic acid, 2,6-dichrolo-4-nitrophenol, N-ethylmaleimide and iodoacetamide. Its function is as follows. Catalyzes the acetyl-CoA-dependent N-acetylation of aromatic amines, and, probably, the O-acetylation of N-hydroxyarylamines. In vitro, catalyzes the N-acetylation of various arylamines such as aminobenzoic acid, aminophenol, aminotoluene, phenetidine, anisidine, aniline, isoniazid and 2-amino-fluorene. N-hydroxyarylamine O-acetyltransferase activity has not been assayed directly, however, NhoA activity is required for the mutagenicity of nitroaromatic compounds, suggesting that it also has O-acetyltransferase activity. This chain is Arylamine N-acetyltransferase (nhoA), found in Escherichia coli (strain K12).